The sequence spans 569 residues: Pyruvate decarboxylase (569 aa).

Pyruvate-binding residues include aspartate 38 and histidine 124. Thiamine diphosphate-binding positions include threonine 398 and glycine 421–isoleucine 423. Aspartate 451 contributes to the Mg(2+) binding site. Residues glycine 452–serine 453 and asparagine 478–isoleucine 483 each bind thiamine diphosphate. 2 residues coordinate Mg(2+): asparagine 478 and glycine 480. Glutamate 484 contacts pyruvate.

The protein belongs to the TPP enzyme family. As to quaternary structure, homotetramer. Mg(2+) serves as cofactor. Thiamine diphosphate is required as a cofactor.

The catalysed reaction is a 2-oxocarboxylate + H(+) = an aldehyde + CO2. It catalyses the reaction pyruvate + H(+) = acetaldehyde + CO2. This is Pyruvate decarboxylase (pdcA) from Aspergillus fumigatus (strain ATCC MYA-4609 / CBS 101355 / FGSC A1100 / Af293) (Neosartorya fumigata).